We begin with the raw amino-acid sequence, 319 residues long: Lambda-crystallin (319 aa).

Residue Ala2 is modified to N-acetylalanine. A Phosphoserine modification is found at Ser3. Residues 16–17 (LV), Asp36, Glu97, and Lys102 each bind NAD(+). The residue at position 111 (Ser111) is a Phosphoserine.

Belongs to the 3-hydroxyacyl-CoA dehydrogenase family. Homodimer. As to expression, detected in eye lens, kidney, liver, heart, lung, brain and testis.

Its subcellular location is the cytoplasm. It carries out the reaction L-gulonate + NAD(+) = 3-dehydro-L-gulonate + NADH + H(+). Inhibited by malonate and by inorganic phosphate. Its function is as follows. Functions as a crystallin in the rabbit eye lens. Has high L-gulonate 3-dehydrogenase activity. It also exhibits low dehydrogenase activity toward L-3-hydroxybutyrate (HBA) and L-threonate. The sequence is that of Lambda-crystallin (CRYL1) from Oryctolagus cuniculus (Rabbit).